The primary structure comprises 266 residues: Apolipoprotein A-I (266 aa).

An N-terminal signal peptide occupies residues 1–18 (MKAVVLTLAVLFLTGSQA). Repeat copies occupy residues 67 to 88 (LKLLDNWDSLSSTVAKLREQIG) and 89 to 110 (PVTQEFWDNLEKETEVLRQEMN). The 10 X approximate tandem repeats stretch occupies residues 67-266 (LKLLDNWDSL…DEATKKLNSQ (200 aa)). Met-109 bears the Methionine sulfoxide mark. The stretch at 111 to 121 (KDLEEVKKKVQ) is one 3; half-length repeat. 5 repeat units span residues 122 to 143 (PYLDEFQSKWHEEVELYRQKVA), 144 to 165 (PLGAELREGARQKLQELQEKLS), 166 to 187 (PLGEELRDRARTHVDALRAQLA), 188 to 209 (PYSEQLRERLAARLQALKEGGG), and 210 to 231 (AALTEYHAKASEHLSALREKAK). A 9; half-length repeat occupies 232–242 (PALEDLRQGLL). Repeat 10 spans residues 243-266 (PVLENFRDSLLAAVDEATKKLNSQ).

It belongs to the apolipoprotein A1/A4/E family. As to quaternary structure, homodimer. Interacts with APOA1BP and CLU. Component of a sperm activating protein complex (SPAP), consisting of APOA1, an immunoglobulin heavy chain, an immunoglobulin light chain and albumin. Interacts with NDRG1. Interacts with SCGB3A2. Interacts with NAXE and YJEFN3. In terms of processing, glycosylated. Post-translationally, palmitoylated. Phosphorylation sites are present in the extracellular medium.

Its subcellular location is the secreted. Its function is as follows. Participates in the reverse transport of cholesterol from tissues to the liver for excretion by promoting cholesterol efflux from tissues and by acting as a cofactor for the lecithin cholesterol acyltransferase (LCAT). As part of the SPAP complex, activates spermatozoa motility. In Neomonachus schauinslandi (Hawaiian monk seal), this protein is Apolipoprotein A-I (APOA1).